A 125-amino-acid chain; its full sequence is Small ribosomal subunit protein uS12m (125 aa).

Positions 1–24 (MPTSNQSIRHGREKKRRTDRTRAL) are disordered. The segment covering 9–19 (RHGREKKRRTD) has biased composition (basic residues).

This sequence belongs to the universal ribosomal protein uS12 family.

It is found in the mitochondrion. Its function is as follows. Protein S12 is involved in the translation initiation step. In Pinus sylvestris (Scotch pine), this protein is Small ribosomal subunit protein uS12m (RPS12).